Reading from the N-terminus, the 387-residue chain is Proline-rich protein 5 (387 aa).

Interaction with RICTOR regions lie at residues 10 to 96 and 189 to 219; these read MSSP…LTKG and HESR…YGLY. A disordered region spans residues 11-33; that stretch reads SSPSLSDLGKREPGAAGADERGT. Residues 18-33 show a composition bias toward basic and acidic residues; the sequence is LGKREPGAAGADERGT. Phosphoserine is present on Ser-253. 2 disordered regions span residues 262–347 and 365–387; these read NPVA…PETL and DFGR…PSVV. Low complexity predominate over residues 310 to 321; it reads SSPSPHSGPCPS. Residue Ser-373 is modified to Phosphoserine.

It belongs to the PROTOR family. Associated component of the mechanistic target of rapamycin complex 2 (mTORC2). Binds directly to MTOR and RICTOR within the TORC2 complex.

Its function is as follows. Associated subunit of mTORC2, which regulates cell growth and survival in response to hormonal signals. mTORC2 is activated by growth factors, but, in contrast to mTORC1, seems to be nutrient-insensitive. mTORC2 seems to function upstream of Rho GTPases to regulate the actin cytoskeleton, probably by activating one or more Rho-type guanine nucleotide exchange factors. PRR5 plays an important role in regulation of PDGFRB expression and in modulation of platelet-derived growth factor signaling. May act as a tumor suppressor in breast cancer. This Rattus norvegicus (Rat) protein is Proline-rich protein 5.